We begin with the raw amino-acid sequence, 317 residues long: MHNYLDFEKPISDLEGKIIELKKLADEDESIDTSEEINRLESRVNDAMQDIYSKLNAWQKTQVARHPQRPHFVDYAKSLFTDFTPLAGDRKFSEDAAIQAGLARFNGQPVAIIGQEKGNDTKSRLKHNFGSARPEGYRKAIRVLELADRFSLPVVTLIDTAGAYPGVGAEERGQAEAIARSTEMCLNVKVPIVSVVIGEGGSGGAIAIATGNRVYMLEHSVYSVISPEGAASILWRDSTRAKEAATNMKITSEDLKSLGVIDGIIPEPIGGAHRAPETVISATGDVIAKALADLSQRSGTQLRAERRQKFLDIGRNL.

In terms of domain architecture, CoA carboxyltransferase C-terminal spans Arg39–Asp293.

Belongs to the AccA family. In terms of assembly, acetyl-CoA carboxylase is a heterohexamer composed of biotin carboxyl carrier protein (AccB), biotin carboxylase (AccC) and two subunits each of ACCase subunit alpha (AccA) and ACCase subunit beta (AccD).

The protein localises to the cytoplasm. It catalyses the reaction N(6)-carboxybiotinyl-L-lysyl-[protein] + acetyl-CoA = N(6)-biotinyl-L-lysyl-[protein] + malonyl-CoA. The protein operates within lipid metabolism; malonyl-CoA biosynthesis; malonyl-CoA from acetyl-CoA: step 1/1. In terms of biological role, component of the acetyl coenzyme A carboxylase (ACC) complex. First, biotin carboxylase catalyzes the carboxylation of biotin on its carrier protein (BCCP) and then the CO(2) group is transferred by the carboxyltransferase to acetyl-CoA to form malonyl-CoA. This chain is Acetyl-coenzyme A carboxylase carboxyl transferase subunit alpha, found in Agrobacterium fabrum (strain C58 / ATCC 33970) (Agrobacterium tumefaciens (strain C58)).